A 254-amino-acid chain; its full sequence is Alcohol dehydrogenase (254 aa).

Residue 10–33 (FVAGLGGIGLDTSREIVKSGPKNL) participates in NAD(+) binding. S138 lines the substrate pocket. Y151 functions as the Proton acceptor in the catalytic mechanism.

The protein belongs to the short-chain dehydrogenases/reductases (SDR) family. In terms of assembly, homodimer.

It carries out the reaction a primary alcohol + NAD(+) = an aldehyde + NADH + H(+). It catalyses the reaction a secondary alcohol + NAD(+) = a ketone + NADH + H(+). The protein is Alcohol dehydrogenase (Adh) of Drosophila differens (Fruit fly).